Here is a 78-residue protein sequence, read N- to C-terminus: Serine--glyoxylate aminotransferase (78 aa).

The protein belongs to the class-V pyridoxal-phosphate-dependent aminotransferase family. Homodimer. It depends on pyridoxal 5'-phosphate as a cofactor. Expressed in leaves but not in root tissue or seedlings.

It localises to the peroxisome. The catalysed reaction is glyoxylate + L-serine = 3-hydroxypyruvate + glycine. It carries out the reaction glyoxylate + L-alanine = glycine + pyruvate. Inhibited by aminooxyacetate. The protein is Serine--glyoxylate aminotransferase of Triticum aestivum (Wheat).